A 286-amino-acid chain; its full sequence is Formamidopyrimidine-DNA glycosylase (286 aa).

Catalysis depends on Pro2, which acts as the Schiff-base intermediate with DNA. The active-site Proton donor is Glu3. Lys61 acts as the Proton donor; for beta-elimination activity in catalysis. The DNA site is built by His96, Arg117, and Lys160. The FPG-type zinc finger occupies 246 to 280 (DAYGREGLPCRRCATPMRRRPWMNRSSYFCPKCQR). Arg270 serves as the catalytic Proton donor; for delta-elimination activity.

It belongs to the FPG family. In terms of assembly, monomer. Zn(2+) serves as cofactor.

The catalysed reaction is Hydrolysis of DNA containing ring-opened 7-methylguanine residues, releasing 2,6-diamino-4-hydroxy-5-(N-methyl)formamidopyrimidine.. The enzyme catalyses 2'-deoxyribonucleotide-(2'-deoxyribose 5'-phosphate)-2'-deoxyribonucleotide-DNA = a 3'-end 2'-deoxyribonucleotide-(2,3-dehydro-2,3-deoxyribose 5'-phosphate)-DNA + a 5'-end 5'-phospho-2'-deoxyribonucleoside-DNA + H(+). Involved in base excision repair of DNA damaged by oxidation or by mutagenic agents. Acts as a DNA glycosylase that recognizes and removes damaged bases. Has a preference for oxidized purines, such as 7,8-dihydro-8-oxoguanine (8-oxoG). Has AP (apurinic/apyrimidinic) lyase activity and introduces nicks in the DNA strand. Cleaves the DNA backbone by beta-delta elimination to generate a single-strand break at the site of the removed base with both 3'- and 5'-phosphates. In Streptomyces avermitilis (strain ATCC 31267 / DSM 46492 / JCM 5070 / NBRC 14893 / NCIMB 12804 / NRRL 8165 / MA-4680), this protein is Formamidopyrimidine-DNA glycosylase.